A 37-amino-acid chain; its full sequence is ATP synthase subunit O, mitochondrial (37 aa).

It belongs to the ATPase delta chain family. In terms of assembly, F-type ATPases have 2 components, CF(1) - the catalytic core - and CF(0) - the membrane proton channel. CF(1) has five subunits: alpha(3), beta(3), gamma(1), delta(1), epsilon(1). CF(0) has three main subunits: a, b and c.

The protein resides in the mitochondrion. Its subcellular location is the mitochondrion inner membrane. Functionally, mitochondrial membrane ATP synthase (F(1)F(0) ATP synthase or Complex V) produces ATP from ADP in the presence of a proton gradient across the membrane which is generated by electron transport complexes of the respiratory chain. F-type ATPases consist of two structural domains, F(1) - containing the extramembraneous catalytic core and F(0) - containing the membrane proton channel, linked together by a central stalk and a peripheral stalk. During catalysis, ATP synthesis in the catalytic domain of F(1) is coupled via a rotary mechanism of the central stalk subunits to proton translocation. Part of the complex F(0) domain and the peripheric stalk, which acts as a stator to hold the catalytic alpha(3)beta(3) subcomplex and subunit a/ATP6 static relative to the rotary elements. The sequence is that of ATP synthase subunit O, mitochondrial from Solanum tuberosum (Potato).